An 858-amino-acid polypeptide reads, in one-letter code: Leucine--tRNA ligase (858 aa).

The 'HIGH' region motif lies at 42 to 52 (PYPSGRLHMGH). Residues 618 to 622 (KMSKS) carry the 'KMSKS' region motif. An ATP-binding site is contributed by Lys-621.

It belongs to the class-I aminoacyl-tRNA synthetase family.

Its subcellular location is the cytoplasm. The catalysed reaction is tRNA(Leu) + L-leucine + ATP = L-leucyl-tRNA(Leu) + AMP + diphosphate. This chain is Leucine--tRNA ligase, found in Aliivibrio fischeri (strain MJ11) (Vibrio fischeri).